The sequence spans 217 residues: Large ribosomal subunit protein uL3 (217 aa).

Positions 129–162 are disordered; the sequence is SRGPMSHGSKNHRAPGSTGAGTTPGRIYPGKRMA. Residues 142–153 show a composition bias toward low complexity; the sequence is APGSTGAGTTPG.

This sequence belongs to the universal ribosomal protein uL3 family. Part of the 50S ribosomal subunit. Forms a cluster with proteins L14 and L19.

One of the primary rRNA binding proteins, it binds directly near the 3'-end of the 23S rRNA, where it nucleates assembly of the 50S subunit. The protein is Large ribosomal subunit protein uL3 of Prochlorococcus marinus (strain MIT 9215).